Consider the following 295-residue polypeptide: Glycine--tRNA ligase alpha subunit (295 aa).

Belongs to the class-II aminoacyl-tRNA synthetase family. As to quaternary structure, tetramer of two alpha and two beta subunits.

The protein localises to the cytoplasm. The catalysed reaction is tRNA(Gly) + glycine + ATP = glycyl-tRNA(Gly) + AMP + diphosphate. This Bacillus subtilis (strain 168) protein is Glycine--tRNA ligase alpha subunit (glyQ).